We begin with the raw amino-acid sequence, 287 residues long: Small ribosomal subunit protein uS10m (287 aa).

Residues 1-33 (MSLFSPHRILLRTGSAFQLATATRALLSTSSQL) constitute a mitochondrion transit peptide. Positions 33 to 43 (LRNTKNAQSGL) are enriched in polar residues. Positions 33–84 (LRNTKNAQSGLAEQARAEEPVASSPSQTTRPEQKSLEEETTKQTQTHADSTV) are disordered. The span at 63-73 (PEQKSLEEETT) shows a compositional bias: basic and acidic residues. The segment covering 74–84 (KQTQTHADSTV) has biased composition (polar residues).

Belongs to the universal ribosomal protein uS10 family. Part of the mitochondrial small ribosomal subunit.

The protein localises to the mitochondrion. Its function is as follows. Involved in mitochondrial genome encoded proteins translation. Involved in the binding of tRNA to the ribosomes. This is Small ribosomal subunit protein uS10m (rsm10) from Emericella nidulans (strain FGSC A4 / ATCC 38163 / CBS 112.46 / NRRL 194 / M139) (Aspergillus nidulans).